The following is an 855-amino-acid chain: DNA mismatch repair protein MutS (855 aa).

616 to 623 lines the ATP pocket; the sequence is GPNMGGKS.

The protein belongs to the DNA mismatch repair MutS family.

In terms of biological role, this protein is involved in the repair of mismatches in DNA. It is possible that it carries out the mismatch recognition step. This protein has a weak ATPase activity. This chain is DNA mismatch repair protein MutS, found in Escherichia coli O139:H28 (strain E24377A / ETEC).